The following is an 87-amino-acid chain: Putative BTB/POZ domain-containing protein At3g29740 (87 aa).

Residues 24–87 (VDVRLKAGDS…KHTELVALVE (64 aa)) enclose the BTB domain.

Its pathway is protein modification; protein ubiquitination. In terms of biological role, may act as a substrate-specific adapter of an E3 ubiquitin-protein ligase complex (CUL3-RBX1-BTB) which mediates the ubiquitination and subsequent proteasomal degradation of target proteins. This is Putative BTB/POZ domain-containing protein At3g29740 from Arabidopsis thaliana (Mouse-ear cress).